The primary structure comprises 566 residues: Lamin-1 (566 aa).

Positions 1–37 are disordered; that stretch reads MSSRKGTRSSRIVTLERSANSSLSNNGGGDDSFGSTL. Serine 2 carries the N-acetylserine modification. Residues 13-47 are head; it reads VTLERSANSSLSNNGGGDDSFGSTLLETSRLQEKD. An IF rod domain is found at 45–387; sequence EKDHLTSLNS…ALLEGEEERL (343 aa). The segment at 48 to 82 is coil 1A; sequence HLTSLNSRLATYIDKVRQLEQENNRLQVQIRDIEV. Positions 83 to 94 are linker 1; sequence VEKKEKSNLADR. The tract at residues 95 to 228 is coil 1B; that stretch reads FEAEKARLRR…AFALQQHKGE (134 aa). The interval 229–256 is linker 2; that stretch reads LEEVRHKRQVDMTTYAKQINDEYQSKLQ. Positions 257 to 385 are coil 2; sequence DQIEEMRAQF…YQALLEGEEE (129 aa). Positions 386-566 are tail; sequence RLNLTQEAPQ…SDPADRCSIM (181 aa). An LTD domain is found at 435–550; sequence RRSKLNKETV…DTVSSITVEF (116 aa). Residues 528-566 form a disordered region; sequence GDNPSARLEDSEGDTVSSITVEFSESSDPSDPADRCSIM. The span at 541-556 shows a compositional bias: polar residues; that stretch reads DTVSSITVEFSESSDP. Residue cysteine 563 is modified to Cysteine methyl ester. Residue cysteine 563 is the site of S-farnesyl cysteine attachment. Positions 564-566 are cleaved as a propeptide — removed in mature form; sequence SIM.

Belongs to the intermediate filament family. As to quaternary structure, interacts with LEM domain proteins lem-2 and emr-1. May interact with unc-84; this interaction may be required to complete the connection between the nuclear lamina and the cytoskeleton. Ubiquitous. Expressed in all cells, except in cells undergoing spermatogenesis.

The protein resides in the nucleus envelope. It localises to the nucleus inner membrane. Functionally, major component of the nuclear lamina, a fibrous layer on the nucleoplasmic side of the inner nuclear membrane. Provides a framework for the nuclear envelope and probably also interacts with chromatin. Essential to maintain the shape and integrity of the nucleus, and for DNA replication. Involved in spatial organization of nuclear pore complexes. It is not a target for ced-3 during apoptosis, suggesting that lamin cleavage is not essential for apoptosis in C.elegans. The sequence is that of Lamin-1 from Caenorhabditis elegans.